A 1018-amino-acid chain; its full sequence is Inner centromere protein pic1 (1018 aa).

A Phosphoserine modification is found at S171. 8 disordered regions span residues 184–207 (VPLR…PKQK), 247–287 (RTKD…SSSP), 306–365 (AKES…PPEI), 522–556 (TRKS…LPPS), 570–756 (EPLH…TSKP), 781–813 (EPDS…EDRK), 848–867 (TKQN…SQSN), and 877–944 (HAPA…LPSW). Composition is skewed to polar residues over residues 189 to 199 (TSPSPSETADS) and 268 to 287 (PSTT…SSSP). The segment covering 309 to 320 (SLTSSTRLSTSY) has biased composition (low complexity). Composition is skewed to polar residues over residues 329-339 (VAFSSETVTSS) and 522-554 (TRKS…SSLP). Composition is skewed to basic and acidic residues over residues 570-580 (EPLHDDSRQNS) and 624-644 (RSSE…RELS). The span at 645–664 (NNEFPSRQTKTVTSANSSNI) shows a compositional bias: polar residues. Composition is skewed to basic and acidic residues over residues 665 to 679 (RDME…RSEP) and 692 to 702 (KPFEEKSEKPT). Composition is skewed to polar residues over residues 705–719 (RLVT…SWHS) and 784–808 (SVTS…TNSQ). The span at 890–902 (PSSKSPLLKTPKS) shows a compositional bias: low complexity.

This sequence belongs to the INCENP family. In terms of assembly, component of the CPC complex at least composed of ark1, bir1 and pic1.

The protein resides in the nucleus. It localises to the cytoplasm. The protein localises to the cytoskeleton. It is found in the spindle. In terms of biological role, component of the chromosomal passenger complex (CPC), a complex that acts as a key regulator of mitosis. Has a role in sister chromatid cohesion and condensation. The protein is Inner centromere protein pic1 (pic1) of Schizosaccharomyces pombe (strain 972 / ATCC 24843) (Fission yeast).